We begin with the raw amino-acid sequence, 298 residues long: UDP-3-O-acyl-N-acetylglucosamine deacetylase (298 aa).

3 residues coordinate Zn(2+): histidine 80, histidine 239, and aspartate 243. Histidine 266 serves as the catalytic Proton donor.

Belongs to the LpxC family. The cofactor is Zn(2+).

It catalyses the reaction a UDP-3-O-[(3R)-3-hydroxyacyl]-N-acetyl-alpha-D-glucosamine + H2O = a UDP-3-O-[(3R)-3-hydroxyacyl]-alpha-D-glucosamine + acetate. Its pathway is glycolipid biosynthesis; lipid IV(A) biosynthesis; lipid IV(A) from (3R)-3-hydroxytetradecanoyl-[acyl-carrier-protein] and UDP-N-acetyl-alpha-D-glucosamine: step 2/6. Functionally, catalyzes the hydrolysis of UDP-3-O-myristoyl-N-acetylglucosamine to form UDP-3-O-myristoylglucosamine and acetate, the committed step in lipid A biosynthesis. This is UDP-3-O-acyl-N-acetylglucosamine deacetylase from Blochmanniella floridana.